The sequence spans 215 residues: FGFR1 oncogene partner 2 homolog (215 aa).

Coiled-coil stretches lie at residues 5–104 (IEKA…MSKY) and 161–185 (KEQE…ITRE). Residues 194 to 215 (DASESTSLSALVTNSDLSLRKN) form a disordered region. Residues 197–215 (ESTSLSALVTNSDLSLRKN) show a composition bias toward polar residues.

It belongs to the SIKE family.

It localises to the cytoplasm. Functionally, may be involved in wound healing pathway. The protein is FGFR1 oncogene partner 2 homolog (FGFR1OP2) of Pongo abelii (Sumatran orangutan).